The chain runs to 251 residues: Small ribosomal subunit protein uS2B (251 aa).

The residue at position 2 (serine 2) is an N-acetylserine. A compositionally biased stretch (low complexity) spans 214 to 225 (AVEEASATGATE). The disordered stretch occupies residues 214–251 (AVEEASATGATEEATEEATEETTEATEWAEDNTENATW). The span at 226-251 (EATEEATEETTEATEWAEDNTENATW) shows a compositional bias: acidic residues.

This sequence belongs to the universal ribosomal protein uS2 family. In terms of assembly, component of the small ribosomal subunit. Mature ribosomes consist of a small (40S) and a large (60S) subunit. The 40S subunit contains about 33 different proteins and 1 molecule of RNA (18S). The 60S subunit contains about 49 different proteins and 3 molecules of RNA (25S, 5.8S and 5S). Interacts with RPS21.

Its subcellular location is the cytoplasm. Its function is as follows. Required for the assembly and/or stability of the 40S ribosomal subunit. Required for the processing of the 20S rRNA-precursor to mature 18S rRNA in a late step of the maturation of 40S ribosomal subunits. The polypeptide is Small ribosomal subunit protein uS2B (Vanderwaltozyma polyspora (strain ATCC 22028 / DSM 70294 / BCRC 21397 / CBS 2163 / NBRC 10782 / NRRL Y-8283 / UCD 57-17) (Kluyveromyces polysporus)).